The following is a 345-amino-acid chain: D-alanine--D-alanine ligase (345 aa).

Residues 133 to 340 enclose the ATP-grasp domain; it reads KLYAKERGVK…IDYRYIHQIQ (208 aa). 162-211 serves as a coordination point for ATP; that stretch reads PLIVKPLRLGSSIGVSIAKNRQELDYALDVAFEFDEAALLEPFMQGIKEY. Residues aspartate 284, glutamate 296, and asparagine 298 each contribute to the Mg(2+) site.

The protein belongs to the D-alanine--D-alanine ligase family. Mg(2+) serves as cofactor. The cofactor is Mn(2+).

It is found in the cytoplasm. It catalyses the reaction 2 D-alanine + ATP = D-alanyl-D-alanine + ADP + phosphate + H(+). It participates in cell wall biogenesis; peptidoglycan biosynthesis. Its function is as follows. Cell wall formation. The chain is D-alanine--D-alanine ligase from Wolinella succinogenes (strain ATCC 29543 / DSM 1740 / CCUG 13145 / JCM 31913 / LMG 7466 / NCTC 11488 / FDC 602W) (Vibrio succinogenes).